The sequence spans 443 residues: MSEMTPREIVSELDKHIIGQNNAKRSVAIALRNRWRRMQLNEELRHEVTPKNILMIGPTGVGKTEIARRLAKLANAPFIKVEATKFTEVGYVGKEVDSIIRDLTDAAVKMVRVQAIEKNRYRAEELAEERILDVLIPPAKNNWGQTEQQQEPSAARQAFRKKLREGQLDDKEIEIDLAAAPMGVEIMAPPGMEEMTSQLQSMFQNLGGQKQKARKLKIKDAMKLLIEEEAAKLVNPEELKQDAIDAVEQHGIVFIDEIDKICKRGESSGPDVSREGVQRDLLPLVEGCTVSTKHGMVKTDHILFIASGAFQIAKPSDLIPELQGRLPIRVELQALTTSDFERILTEPNASITVQYKALMATEGVNIEFTDSGIKRIAEAAWQVNESTENIGARRLHTVLERLMEEISYDASDLSGQNITIDADYVSKHLDALVADEDLSRFIL.

ATP contacts are provided by residues I18, G60–E65, D256, E321, and R393.

Belongs to the ClpX chaperone family. HslU subfamily. A double ring-shaped homohexamer of HslV is capped on each side by a ring-shaped HslU homohexamer. The assembly of the HslU/HslV complex is dependent on binding of ATP.

Its subcellular location is the cytoplasm. In terms of biological role, ATPase subunit of a proteasome-like degradation complex; this subunit has chaperone activity. The binding of ATP and its subsequent hydrolysis by HslU are essential for unfolding of protein substrates subsequently hydrolyzed by HslV. HslU recognizes the N-terminal part of its protein substrates and unfolds these before they are guided to HslV for hydrolysis. The chain is ATP-dependent protease ATPase subunit HslU from Escherichia coli O157:H7 (strain EC4115 / EHEC).